The chain runs to 409 residues: U-box domain-containing protein 28 (409 aa).

The U-box domain occupies 10–84; that stretch reads TVPCFFKCPI…DHWSDSINRR (75 aa). ARM repeat units follow at residues 178-218, 219-261, and 263-304; these read RLSN…FIAV, DAES…AIAS, and KRVK…AISS.

The catalysed reaction is S-ubiquitinyl-[E2 ubiquitin-conjugating enzyme]-L-cysteine + [acceptor protein]-L-lysine = [E2 ubiquitin-conjugating enzyme]-L-cysteine + N(6)-ubiquitinyl-[acceptor protein]-L-lysine.. It functions in the pathway protein modification; protein ubiquitination. Functionally, functions as an E3 ubiquitin ligase. This is U-box domain-containing protein 28 (PUB28) from Arabidopsis thaliana (Mouse-ear cress).